Here is a 341-residue protein sequence, read N- to C-terminus: Ferrochelatase (341 aa).

Fe cation is bound by residues His-189 and Glu-293.

The protein belongs to the ferrochelatase family.

The protein resides in the cytoplasm. It carries out the reaction heme b + 2 H(+) = protoporphyrin IX + Fe(2+). The protein operates within porphyrin-containing compound metabolism; protoheme biosynthesis; protoheme from protoporphyrin-IX: step 1/1. Catalyzes the ferrous insertion into protoporphyrin IX. In Stutzerimonas stutzeri (strain A1501) (Pseudomonas stutzeri), this protein is Ferrochelatase.